Here is an 89-residue protein sequence, read N- to C-terminus: Large ribosomal subunit protein bL27 (89 aa).

Positions Met-1–Arg-20 are disordered.

The protein belongs to the bacterial ribosomal protein bL27 family.

This chain is Large ribosomal subunit protein bL27, found in Paramagnetospirillum magneticum (strain ATCC 700264 / AMB-1) (Magnetospirillum magneticum).